The chain runs to 179 residues: Inosine/xanthosine triphosphatase (179 aa).

8 to 13 (TTNPAK) contributes to the substrate binding site. Positions 38 and 68 each coordinate Mg(2+). 68–69 (EA) contributes to the substrate binding site.

Belongs to the YjjX NTPase family. As to quaternary structure, homodimer. The cofactor is Mg(2+). Requires Mn(2+) as cofactor.

It carries out the reaction XTP + H2O = XDP + phosphate + H(+). The catalysed reaction is ITP + H2O = IDP + phosphate + H(+). Its function is as follows. Phosphatase that hydrolyzes non-canonical purine nucleotides such as XTP and ITP to their respective diphosphate derivatives. Probably excludes non-canonical purines from DNA/RNA precursor pool, thus preventing their incorporation into DNA/RNA and avoiding chromosomal lesions. This chain is Inosine/xanthosine triphosphatase, found in Proteus mirabilis (strain HI4320).